The sequence spans 341 residues: RNA 3'-terminal phosphate cyclase (341 aa).

ATP is bound by residues Gln102 and His283 to Gln287. His308 serves as the catalytic Tele-AMP-histidine intermediate.

Belongs to the RNA 3'-terminal cyclase family. Type 1 subfamily.

The protein resides in the cytoplasm. It catalyses the reaction a 3'-end 3'-phospho-ribonucleotide-RNA + ATP = a 3'-end 2',3'-cyclophospho-ribonucleotide-RNA + AMP + diphosphate. In terms of biological role, catalyzes the conversion of 3'-phosphate to a 2',3'-cyclic phosphodiester at the end of RNA. The mechanism of action of the enzyme occurs in 3 steps: (A) adenylation of the enzyme by ATP; (B) transfer of adenylate to an RNA-N3'P to produce RNA-N3'PP5'A; (C) and attack of the adjacent 2'-hydroxyl on the 3'-phosphorus in the diester linkage to produce the cyclic end product. The biological role of this enzyme is unknown but it is likely to function in some aspects of cellular RNA processing. This Pseudomonas aeruginosa (strain UCBPP-PA14) protein is RNA 3'-terminal phosphate cyclase.